The following is a 280-amino-acid chain: uncharacterized protein (280 aa).

3 disordered regions span residues 20 to 41, 170 to 199, and 251 to 280; these read DVKK…QQQQ, INSP…KDKA, and GNSK…SFSF. Residues 25–41 show a composition bias toward low complexity; sequence QQQQQQQPQAPPQQQQQ. The segment covering 178–199 has biased composition (basic and acidic residues); sequence EEEKPQLSKKEEPEWLKGKDKA.

This is an uncharacterized protein from Dictyostelium discoideum (Social amoeba).